Here is a 329-residue protein sequence, read N- to C-terminus: Sideroflexin (329 aa).

Transmembrane regions (helical) follow at residues 95 to 115, 147 to 167, 183 to 203, 238 to 258, and 274 to 294; these read AFLPINVIICAGLILPNASIG, ILEAYASAVGISCSLAVGLGW, LRMMVPFTAVTSAGIANVLIM, FSRAATSFPALLLPPIVMGLF, and LNLAVIAAIFNTSLPAAIALF.

The protein belongs to the sideroflexin family.

It is found in the mitochondrion membrane. Its function is as follows. Mitochondrial amino-acid transporter that mediates transport of serine into mitochondria. In Dictyostelium discoideum (Social amoeba), this protein is Sideroflexin.